The following is a 254-amino-acid chain: Type III pantothenate kinase (254 aa).

Residue 6–13 (DVGNTNTV) participates in ATP binding. Residues Tyr100 and 107–110 (GADR) contribute to the substrate site. Residue Asp109 is the Proton acceptor of the active site. Asp129 is a binding site for K(+). Thr132 serves as a coordination point for ATP. Substrate is bound at residue Thr184.

The protein belongs to the type III pantothenate kinase family. Homodimer. The cofactor is NH4(+). It depends on K(+) as a cofactor.

The protein resides in the cytoplasm. The enzyme catalyses (R)-pantothenate + ATP = (R)-4'-phosphopantothenate + ADP + H(+). The protein operates within cofactor biosynthesis; coenzyme A biosynthesis; CoA from (R)-pantothenate: step 1/5. Its function is as follows. Catalyzes the phosphorylation of pantothenate (Pan), the first step in CoA biosynthesis. The protein is Type III pantothenate kinase of Anaeromyxobacter sp. (strain Fw109-5).